The chain runs to 423 residues: Cyclin-dependent kinase 14 (423 aa).

S32, S49, and S88 each carry phosphoserine. Over residues 49 to 64 the composition is skewed to polar residues; sequence SENNACINFKTSSTGK. The disordered stretch occupies residues 49–87; sequence SENNACINFKTSSTGKESPKVRRHSSPSSPTSPKFGKAD. The Protein kinase domain maps to 89–373; sequence YEKLEKLGEG…AQAALSHEYF (285 aa). ATP is bound by residues 95-103 and K118; that span reads LGEGSYATV. Catalysis depends on D210, which acts as the Proton acceptor. Positions 403–423 are disordered; that stretch reads ESMRAFGKNNSYGKSLSNSKH. Over residues 410–423 the composition is skewed to polar residues; sequence KNNSYGKSLSNSKH.

Belongs to the protein kinase superfamily. CMGC Ser/Thr protein kinase family. CDC2/CDKX subfamily. As to quaternary structure, found in a complex with LRP6, CCNY and CAPRIN2 during G2/M stage; CAPRIN2 functions as a scaffold for the complex by binding to CCNY via its N terminus and to CDK14 via its C terminus. Interacts with CCNY; CCNY mediates its recruitment to the plasma membrane and promotes phosphorylation of LRP6. Interacts with CCDN3 and CDKN1A. Interacts with SEPT8. Interacts with 14-3-3 proteina YWHAB, YWHAE, YWHAH and YWHAQ.

Its subcellular location is the cell membrane. The protein resides in the cytoplasm. It is found in the nucleus. It carries out the reaction L-seryl-[protein] + ATP = O-phospho-L-seryl-[protein] + ADP + H(+). The catalysed reaction is L-threonyl-[protein] + ATP = O-phospho-L-threonyl-[protein] + ADP + H(+). Serine/threonine-protein kinase activity is promoted by associated cyclins CCDN3 and CCNY and repressed by CDKN1A. Serine/threonine-protein kinase involved in the control of the eukaryotic cell cycle, whose activity is controlled by an associated cyclin. Acts as a cell-cycle regulator of Wnt signaling pathway during G2/M phase by mediating the phosphorylation of LRP6 at 'Ser-1490', leading to the activation of the Wnt signaling pathway. Acts as a regulator of cell cycle progression and cell proliferation via its interaction with CCDN3. Phosphorylates RB1 in vitro, however the relevance of such result remains to be confirmed in vivo. May also play a role in meiosis, neuron differentiation and may indirectly act as a negative regulator of insulin-responsive glucose transport. This Callithrix jacchus (White-tufted-ear marmoset) protein is Cyclin-dependent kinase 14 (CDK14).